A 104-amino-acid chain; its full sequence is uncharacterized protein (104 aa).

This is an uncharacterized protein from Saccharomyces cerevisiae (strain ATCC 204508 / S288c) (Baker's yeast).